A 156-amino-acid chain; its full sequence is Mitochondrial intermembrane space cysteine motif-containing protein MIX17 (156 aa).

A mitochondrion-targeting transit peptide spans 1–21 (MARSRGSSRPISRSRPTQTRS). The segment covering 1 to 21 (MARSRGSSRPISRSRPTQTRS) has biased composition (low complexity). Disordered regions lie at residues 1–50 (MARS…GAQT) and 78–110 (AGITGMFSGSGSDSAPVEQQQQNMANTSGQTQT). Positions 84–110 (FSGSGSDSAPVEQQQQNMANTSGQTQT) are enriched in polar residues. Positions 115–156 (GRTCEIDARNFTRCLDENNGNFQICDYYLQQLKACQEAARQY) constitute a CHCH domain. The short motif at 118 to 128 (CEIDARNFTRC) is the Cx9C motif element. 2 disulfide bridges follow: Cys-118/Cys-149 and Cys-128/Cys-139.

Its subcellular location is the mitochondrion intermembrane space. This Saccharomyces cerevisiae (strain ATCC 204508 / S288c) (Baker's yeast) protein is Mitochondrial intermembrane space cysteine motif-containing protein MIX17 (MIX17).